The primary structure comprises 499 residues: Catalase (499 aa).

A disordered region spans residues Met-1–Gly-25. The segment covering Met-7 to Thr-23 has biased composition (polar residues). Catalysis depends on residues His-55 and Asn-127. Tyr-337 contributes to the heme binding site.

It belongs to the catalase family. In terms of assembly, homotetramer. Heme serves as cofactor.

The protein resides in the periplasm. The catalysed reaction is 2 H2O2 = O2 + 2 H2O. Decomposes hydrogen peroxide into water and oxygen; serves to protect cells from the toxic effects of hydrogen peroxide. The polypeptide is Catalase (katA) (Brucella abortus biovar 1 (strain 9-941)).